We begin with the raw amino-acid sequence, 140 residues long: HTH-type transcriptional regulator LysM (140 aa).

In terms of domain architecture, HTH asnC-type spans 4–67 (VDESDLKILE…ELENEIRAIV (64 aa)). The H-T-H motif DNA-binding region spans 23–42 (YTSIAKELKISEAAVRKRIE).

In terms of assembly, homotetramer.

It is found in the cytoplasm. It participates in amino-acid biosynthesis; L-lysine biosynthesis via AAA pathway [regulation]. Its function is as follows. In the absence or at low concentrations of lysine, activates the biosynthesis of this amino acid via the alpha-aminoadipate (AAA) pathway. This chain is HTH-type transcriptional regulator LysM (lysM), found in Sulfurisphaera tokodaii (strain DSM 16993 / JCM 10545 / NBRC 100140 / 7) (Sulfolobus tokodaii).